A 390-amino-acid polypeptide reads, in one-letter code: MGDTFIRHIALLGFEKRFIPSQHYVYMFLVKWQDLSEKVVYRKFTEIYEFHKMLKEMFPIEAGEIHTENRVIPHLPAPRWFDGQRAAESRQGTLTEYFNGLMGLPVKISRCPHLLDFFKVRPDDLKLPTDSQAKKPETYLVPKDGKNNVADITGPIILQTYRAIADYEKSSGTEMTVATGDVVDVVEKSESGWWFCQMKTKRGWVPASYLEPLDSPDEAEDPDPNYAGEPYVTIKAYAAVEEDEMSLSEGEAIEVIHKLLDGWWVVRKGDITGYFPSMYLQKAGEEITQAQRQIRGRGAPPRRSTIRNAQSIHQRSRKRLSQDTYRRNSVRFLQQRRRPGRPGPLSTDGTKDNPSTPRVKPQPAVPPRPSSDLILHRCTESTKRKLTSAV.

Residues 4 to 125 enclose the PX domain; the sequence is TFIRHIALLG…DFFKVRPDDL (122 aa). 2 SH3 domains span residues 156-215 and 226-285; these read IILQ…PLDS and YAGE…KAGE. The disordered stretch occupies residues 291-390; it reads QRQIRGRGAP…STKRKLTSAV (100 aa). Residues serine 304, serine 321, serine 329, and serine 346 each carry the phosphoserine modification. Basic and acidic residues predominate over residues 374 to 383; the sequence is ILHRCTESTK.

In terms of assembly, component of the phagocyte NADPH oxidase complex composed of an obligatory core heterodimer formed by the membrane proteins CYBA and CYBB and the cytosolic regulatory subunits NCF1/p47-phox, NCF2/p67-phox, NCF4/p40-phox and the small GTPase RAC1 or RAC2. Part of a cytosolic complex composed at least by NCF1, NCF2 and NCF4. Interacts (via C-terminus) with NCF2 (via the C-terminal SH3 domain). Interacts with NCF4. Interacts with CYBB. Interacts (via the second SH3 domain) with CYBA; interaction is phosphorylation-dependent. Interacts with NOXA1. Interacts with ADAM15. Interacts with TRAF4. Interacts with FASLG. Interacts with PARK7 (via C-terminus); the interaction is enhanced by LPS and modulates NCF1 phosphorylation and membrane translocation. In terms of processing, phosphorylated by PRKCD; phosphorylation induces activation of NCF1, leading to assembly and activation of the NADPH oxidase complex.

Its subcellular location is the cytoplasm. It is found in the cytosol. The protein resides in the membrane. Functionally, subunit of the phagocyte NADPH oxidase complex that mediates the transfer of electrons from cytosolic NADPH to O2 to produce the superoxide anion (O2(-)). In the activated complex, electrons are first transferred from NADPH to flavin adenine dinucleotide (FAD) and subsequently transferred via two heme molecules to molecular oxygen, producing superoxide through an outer-sphere reaction. Activation of the NADPH oxidase complex is initiated by the assembly of cytosolic subunits of the NADPH oxidase complex with the core NADPH oxidase complex to form a complex at the plasma membrane or phagosomal membrane. This activation process is initiated by phosphorylation dependent binding of the cytosolic NCF1/p47-phox subunit to the C-terminus of CYBA/p22-phox. This is Neutrophil cytosol factor 1 from Mus musculus (Mouse).